An 803-amino-acid chain; its full sequence is Phosphoribosylformylglycinamidine synthase subunit PurL (803 aa).

His-65 is a catalytic residue. Residues Tyr-68 and Lys-107 each coordinate ATP. Glu-109 lines the Mg(2+) pocket. Substrate contacts are provided by residues 110–113 (SHNH) and Arg-132. His-111 (proton acceptor) is an active-site residue. Residue Asp-133 coordinates Mg(2+). Gln-256 serves as a coordination point for substrate. Mg(2+) is bound at residue Asp-284. 328–330 (ESQ) is a binding site for substrate. The ATP site is built by Asn-537 and Gly-574. Residue Asn-575 coordinates Mg(2+). Position 577 (Ser-577) interacts with substrate.

This sequence belongs to the FGAMS family. Monomer. Part of the FGAM synthase complex composed of 1 PurL, 1 PurQ and 2 PurS subunits.

Its subcellular location is the cytoplasm. It carries out the reaction N(2)-formyl-N(1)-(5-phospho-beta-D-ribosyl)glycinamide + L-glutamine + ATP + H2O = 2-formamido-N(1)-(5-O-phospho-beta-D-ribosyl)acetamidine + L-glutamate + ADP + phosphate + H(+). It functions in the pathway purine metabolism; IMP biosynthesis via de novo pathway; 5-amino-1-(5-phospho-D-ribosyl)imidazole from N(2)-formyl-N(1)-(5-phospho-D-ribosyl)glycinamide: step 1/2. Its function is as follows. Part of the phosphoribosylformylglycinamidine synthase complex involved in the purines biosynthetic pathway. Catalyzes the ATP-dependent conversion of formylglycinamide ribonucleotide (FGAR) and glutamine to yield formylglycinamidine ribonucleotide (FGAM) and glutamate. The FGAM synthase complex is composed of three subunits. PurQ produces an ammonia molecule by converting glutamine to glutamate. PurL transfers the ammonia molecule to FGAR to form FGAM in an ATP-dependent manner. PurS interacts with PurQ and PurL and is thought to assist in the transfer of the ammonia molecule from PurQ to PurL. The polypeptide is Phosphoribosylformylglycinamidine synthase subunit PurL (Prochlorococcus marinus (strain NATL2A)).